The primary structure comprises 426 residues: Serine--tRNA ligase (426 aa).

Residue 233–235 (TAE) coordinates L-serine. 264–266 (RSE) contributes to the ATP binding site. E287 is a binding site for L-serine. 351-354 (EISS) contributes to the ATP binding site. S387 provides a ligand contact to L-serine.

The protein belongs to the class-II aminoacyl-tRNA synthetase family. Type-1 seryl-tRNA synthetase subfamily. As to quaternary structure, homodimer. The tRNA molecule binds across the dimer.

It is found in the cytoplasm. It catalyses the reaction tRNA(Ser) + L-serine + ATP = L-seryl-tRNA(Ser) + AMP + diphosphate + H(+). It carries out the reaction tRNA(Sec) + L-serine + ATP = L-seryl-tRNA(Sec) + AMP + diphosphate + H(+). It functions in the pathway aminoacyl-tRNA biosynthesis; selenocysteinyl-tRNA(Sec) biosynthesis; L-seryl-tRNA(Sec) from L-serine and tRNA(Sec): step 1/1. Its function is as follows. Catalyzes the attachment of serine to tRNA(Ser). Is also able to aminoacylate tRNA(Sec) with serine, to form the misacylated tRNA L-seryl-tRNA(Sec), which will be further converted into selenocysteinyl-tRNA(Sec). This is Serine--tRNA ligase from Pseudomonas putida (strain ATCC 700007 / DSM 6899 / JCM 31910 / BCRC 17059 / LMG 24140 / F1).